The sequence spans 441 residues: COP9 signalosome complex subunit 1 (441 aa).

The tract at residues 1–28 is disordered; the sequence is MERDEEASGPMMEMCTNGGEETSNRRPI. One can recognise a PCI domain in the interval 230–400; that stretch reads KYKLAARKFL…KILYARHADQ (171 aa).

Belongs to the CSN1 family. As to quaternary structure, component of the CSN complex, probably composed of CSN1, CSN2, CSN3, CSN4, CSN5 (CSN5A or CSN5B), CSN6 (CSN6A or CSN6B), CSN7 and CSN8. Interacts with itself and (via PCI domain) with CSN7 (via PCI domain). In the CSN complex, it probably interacts directly with CSN2, CSN3, CSN4 and CSN5B. Interacts with the 26S proteasome subunit RPN6. Interacts (via N-terminal domain) with TSA1 (via C-terminal domain). Binds to the translation initiation factors TIF3C1, TIF3E1 and TIF3H1. Expressed in leaves, flowers, immature siliques, and light-grown roots.

It is found in the cytoplasm. Its subcellular location is the nucleus. Its function is as follows. Component of the COP9 signalosome complex (CSN), a complex involved in various cellular and developmental processes such as photomorphogenesis and auxin and jasmonate responses. The CSN complex is an essential regulator of the ubiquitin (Ubl) conjugation pathway by mediating the deneddylation of the cullin subunits of SCF-type E3 ligase complexes, leading to decrease the Ubl ligase activity of SCF. It is involved in repression of photomorphogenesis in darkness by regulating the activity of COP1-containing Ubl ligase complexes. The complex is also required for degradation of IAA6 by regulating the activity of the Ubl ligase SCF-TIR complex. In the complex, it plays a central role in CSN assembly. The protein is COP9 signalosome complex subunit 1 (CSN1) of Arabidopsis thaliana (Mouse-ear cress).